The primary structure comprises 318 residues: NADH-ubiquinone oxidoreductase chain 1 (318 aa).

8 consecutive transmembrane segments (helical) span residues 2–22, 76–96, 102–122, 146–166, 171–191, 217–237, 253–273, and 294–314; these read FMIN…FLTL, TLAL…YPLI, LLFI…SGWA, LAII…STLI, YLWL…STLA, AGPF…MNAL, ETYT…FLWV, and LPLT…ASCI.

Belongs to the complex I subunit 1 family. In terms of assembly, core subunit of respiratory chain NADH dehydrogenase (Complex I) which is composed of 45 different subunits.

It localises to the mitochondrion inner membrane. It catalyses the reaction a ubiquinone + NADH + 5 H(+)(in) = a ubiquinol + NAD(+) + 4 H(+)(out). Functionally, core subunit of the mitochondrial membrane respiratory chain NADH dehydrogenase (Complex I) which catalyzes electron transfer from NADH through the respiratory chain, using ubiquinone as an electron acceptor. Essential for the catalytic activity and assembly of complex I. In Lemur catta (Ring-tailed lemur), this protein is NADH-ubiquinone oxidoreductase chain 1 (MT-ND1).